The following is a 473-amino-acid chain: Major myo-inositol transporter IolT (473 aa).

The next 12 helical transmembrane spans lie at 14-34 (IILVSTFGGLLFGYDTGVLNG), 49-69 (AFTEGLVTSSLLFGAALGAVF), 83-103 (ILFLAVIFFISTIGCTFAPNV), 111-131 (FVLGIAVGGASVTVPAYLAEM), 146-166 (LMIVSGQLLAFVFNAILGTTM), 172-192 (VWRFMLVIASLPALFLFFGMI), 256-276 (IVFIGLGIAIVQQITGVNSIM), 295-315 (IGNIANGVISVLATFVGIWLL), 325-345 (MTGLIGTTTALLLIGIFSLVL), 350-370 (ALPYVVLSLTVTFLAFQQGAI), 389-409 (LGMGVTVFCLWMVNFAVSFTF), and 411-431 (ILLAAIGLSTTFFIFVGLGIC).

It belongs to the major facilitator superfamily. Sugar transporter (TC 2.A.1.1) family.

It localises to the cell membrane. Its pathway is polyol metabolism; myo-inositol degradation into acetyl-CoA. Functionally, major myo-inositol uptake transporter. This Bacillus subtilis (strain 168) protein is Major myo-inositol transporter IolT (iolT).